We begin with the raw amino-acid sequence, 318 residues long: Pantothenate kinase (318 aa).

96 to 103 (GSVAVGKS) serves as a coordination point for ATP.

It belongs to the prokaryotic pantothenate kinase family.

The protein resides in the cytoplasm. It catalyses the reaction (R)-pantothenate + ATP = (R)-4'-phosphopantothenate + ADP + H(+). It participates in cofactor biosynthesis; coenzyme A biosynthesis; CoA from (R)-pantothenate: step 1/5. The chain is Pantothenate kinase from Nitrobacter hamburgensis (strain DSM 10229 / NCIMB 13809 / X14).